The sequence spans 213 residues: Redox-sensing transcriptional repressor Rex (213 aa).

Positions 18–57 form a DNA-binding region, H-T-H motif; that stretch reads LYYRIFKRFHAEKIERANSKQIAEAIGIDSATVRRDFSYF. 92-97 is a binding site for NAD(+); sequence GIGNMG.

The protein belongs to the transcriptional regulatory Rex family. As to quaternary structure, homodimer.

It is found in the cytoplasm. Its function is as follows. Modulates transcription in response to changes in cellular NADH/NAD(+) redox state. Binds to the promoter of the aldehyde-alcohol dehydrogenase adhE gene. Functions as a redox-dependent repressor of adhE expression. In Streptococcus pneumoniae (strain ATCC BAA-255 / R6), this protein is Redox-sensing transcriptional repressor Rex.